The sequence spans 279 residues: Urease accessory protein UreD (279 aa).

It belongs to the UreD family. In terms of assembly, ureD, UreF and UreG form a complex that acts as a GTP-hydrolysis-dependent molecular chaperone, activating the urease apoprotein by helping to assemble the nickel containing metallocenter of UreC. The UreE protein probably delivers the nickel.

It is found in the cytoplasm. Functionally, required for maturation of urease via the functional incorporation of the urease nickel metallocenter. The protein is Urease accessory protein UreD of Trichodesmium erythraeum (strain IMS101).